The sequence spans 330 residues: Peptide transport system ATP-binding protein SapD (330 aa).

The ABC transporter domain occupies 6–259; it reads IRNLTIEFKT…PHHPYTQALI (254 aa). Residue 40-47 participates in ATP binding; it reads GESGSGKS.

Belongs to the ABC transporter superfamily.

The protein localises to the cell inner membrane. Its function is as follows. Involved in a peptide intake transport system that plays a role in the resistance to antimicrobial peptides. The chain is Peptide transport system ATP-binding protein SapD (sapD) from Escherichia coli O157:H7.